Consider the following 124-residue polypeptide: uncharacterized protein (124 aa).

The span at 62 to 72 shows a compositional bias: basic residues; sequence KKNKKQTFLKH. A disordered region spans residues 62–86; that stretch reads KKNKKQTFLKHHQSDDHSENKVYKS. Residues 73–83 show a composition bias toward basic and acidic residues; that stretch reads HQSDDHSENKV. Residues 80-112 adopt a coiled-coil conformation; the sequence is ENKVYKSKKLEKKIQQLNKKKQLIDTKINFLKE.

This is an uncharacterized protein from Dictyostelium discoideum (Social amoeba).